The chain runs to 248 residues: tRNA pseudouridine synthase A (248 aa).

The Nucleophile role is filled by Asp55. Tyr114 is a substrate binding site.

This sequence belongs to the tRNA pseudouridine synthase TruA family. As to quaternary structure, homodimer.

It catalyses the reaction uridine(38/39/40) in tRNA = pseudouridine(38/39/40) in tRNA. Formation of pseudouridine at positions 38, 39 and 40 in the anticodon stem and loop of transfer RNAs. The polypeptide is tRNA pseudouridine synthase A (Rhodopseudomonas palustris (strain ATCC BAA-98 / CGA009)).